The following is a 105-amino-acid chain: Integration host factor subunit alpha (105 aa).

The protein belongs to the bacterial histone-like protein family. Heterodimer of an alpha and a beta chain.

Its function is as follows. This protein is one of the two subunits of integration host factor, a specific DNA-binding protein that functions in genetic recombination as well as in transcriptional and translational control. The sequence is that of Integration host factor subunit alpha from Rhodospirillum rubrum (strain ATCC 11170 / ATH 1.1.1 / DSM 467 / LMG 4362 / NCIMB 8255 / S1).